The following is a 168-amino-acid chain: Crossover junction endodeoxyribonuclease RuvC (168 aa).

Catalysis depends on residues aspartate 8, glutamate 68, and aspartate 140. Mg(2+) is bound by residues aspartate 8, glutamate 68, and aspartate 140.

Belongs to the RuvC family. Homodimer which binds Holliday junction (HJ) DNA. The HJ becomes 2-fold symmetrical on binding to RuvC with unstacked arms; it has a different conformation from HJ DNA in complex with RuvA. In the full resolvosome a probable DNA-RuvA(4)-RuvB(12)-RuvC(2) complex forms which resolves the HJ. Mg(2+) is required as a cofactor.

Its subcellular location is the cytoplasm. It carries out the reaction Endonucleolytic cleavage at a junction such as a reciprocal single-stranded crossover between two homologous DNA duplexes (Holliday junction).. Functionally, the RuvA-RuvB-RuvC complex processes Holliday junction (HJ) DNA during genetic recombination and DNA repair. Endonuclease that resolves HJ intermediates. Cleaves cruciform DNA by making single-stranded nicks across the HJ at symmetrical positions within the homologous arms, yielding a 5'-phosphate and a 3'-hydroxyl group; requires a central core of homology in the junction. The consensus cleavage sequence is 5'-(A/T)TT(C/G)-3'. Cleavage occurs on the 3'-side of the TT dinucleotide at the point of strand exchange. HJ branch migration catalyzed by RuvA-RuvB allows RuvC to scan DNA until it finds its consensus sequence, where it cleaves and resolves the cruciform DNA. This is Crossover junction endodeoxyribonuclease RuvC from Gluconobacter oxydans (strain 621H) (Gluconobacter suboxydans).